The chain runs to 207 residues: Guanylate kinase (207 aa).

In terms of domain architecture, Guanylate kinase-like spans 6–185; sequence GLLIVLSGPS…AKNRIQCIVE (180 aa). ATP is bound at residue 13-20; it reads GPSGVGKG.

It belongs to the guanylate kinase family.

The protein resides in the cytoplasm. The catalysed reaction is GMP + ATP = GDP + ADP. Functionally, essential for recycling GMP and indirectly, cGMP. This chain is Guanylate kinase, found in Staphylococcus aureus (strain bovine RF122 / ET3-1).